Consider the following 430-residue polypeptide: Replication factor C large subunit (430 aa).

Residue 75 to 82 (GPPGTGKT) coordinates ATP.

It belongs to the activator 1 small subunits family. RfcL subfamily. As to quaternary structure, heteromultimer composed of small subunits (RfcS) and large subunits (RfcL).

In terms of biological role, part of the RFC clamp loader complex which loads the PCNA sliding clamp onto DNA. This Nanoarchaeum equitans (strain Kin4-M) protein is Replication factor C large subunit.